A 378-amino-acid polypeptide reads, in one-letter code: Forkhead box protein F1 (378 aa).

The segment at 1–45 is disordered; the sequence is MSAPDKQQPPHGGGTGGGGGAGGQAMDPAAAGPTKAKKTNAGVRR. The segment covering 11–23 has biased composition (gly residues); it reads HGGGTGGGGGAGG. Positions 24-42 are enriched in low complexity; that stretch reads QAMDPAAAGPTKAKKTNAG. Positions 47 to 138 form a DNA-binding region, fork-head; that stretch reads EKPPYSYIAL…EFMFEEGSFR (92 aa).

In terms of tissue distribution, expressed primarily in lung in alveolar type II pneumocyte cells, and to a lesser extent in placenta, stomach, intestine and colon.

It localises to the nucleus. Probable transcription activator for a number of lung-specific genes. In Mus musculus (Mouse), this protein is Forkhead box protein F1 (Foxf1).